The sequence spans 167 residues: Plastocyanin major isoform, chloroplastic (167 aa).

A chloroplast-targeting transit peptide spans 1-52; that stretch reads MASVTSATVAIPSFTGLKASTIKSSATVRIQTAAVASPKLTVKSSLKNFGVA. The transit peptide at 53–68 directs the protein to the thylakoid; that stretch reads AVAAAASIALAGNAMA. Positions 69–167 constitute a Plastocyanin-like domain; sequence IEVLLGGGDG…AGMVGKVTVN (99 aa). Residues His105, Cys152, His155, and Met160 each coordinate Cu cation.

This sequence belongs to the plastocyanin family. Cu(2+) serves as cofactor.

Its subcellular location is the plastid. The protein resides in the chloroplast thylakoid membrane. In terms of biological role, participates in electron transfer between P700 and the cytochrome b6-f complex in photosystem I. Seems to be the major plastocyanin in Arabidopsis. This Arabidopsis thaliana (Mouse-ear cress) protein is Plastocyanin major isoform, chloroplastic (DRT112).